The sequence spans 434 residues: Serine hydroxymethyltransferase 2 (434 aa).

(6S)-5,6,7,8-tetrahydrofolate contacts are provided by residues L136 and G140–L142. The residue at position 245 (K245) is an N6-(pyridoxal phosphate)lysine.

It belongs to the SHMT family. In terms of assembly, homodimer. Requires pyridoxal 5'-phosphate as cofactor.

Its subcellular location is the cytoplasm. The enzyme catalyses (6R)-5,10-methylene-5,6,7,8-tetrahydrofolate + glycine + H2O = (6S)-5,6,7,8-tetrahydrofolate + L-serine. The protein operates within one-carbon metabolism; tetrahydrofolate interconversion. It participates in amino-acid biosynthesis; glycine biosynthesis; glycine from L-serine: step 1/1. Its function is as follows. Catalyzes the reversible interconversion of serine and glycine with tetrahydrofolate (THF) serving as the one-carbon carrier. This reaction serves as the major source of one-carbon groups required for the biosynthesis of purines, thymidylate, methionine, and other important biomolecules. Also exhibits THF-independent aldolase activity toward beta-hydroxyamino acids, producing glycine and aldehydes, via a retro-aldol mechanism. This is Serine hydroxymethyltransferase 2 from Rhodopseudomonas palustris (strain ATCC BAA-98 / CGA009).